The following is a 243-amino-acid chain: Ubiquinone/menaquinone biosynthesis C-methyltransferase UbiE (243 aa).

S-adenosyl-L-methionine-binding positions include T69, D90, and D116–A117.

The protein belongs to the class I-like SAM-binding methyltransferase superfamily. MenG/UbiE family.

It catalyses the reaction a 2-demethylmenaquinol + S-adenosyl-L-methionine = a menaquinol + S-adenosyl-L-homocysteine + H(+). It carries out the reaction a 2-methoxy-6-(all-trans-polyprenyl)benzene-1,4-diol + S-adenosyl-L-methionine = a 5-methoxy-2-methyl-3-(all-trans-polyprenyl)benzene-1,4-diol + S-adenosyl-L-homocysteine + H(+). It functions in the pathway quinol/quinone metabolism; menaquinone biosynthesis; menaquinol from 1,4-dihydroxy-2-naphthoate: step 2/2. The protein operates within cofactor biosynthesis; ubiquinone biosynthesis. In terms of biological role, methyltransferase required for the conversion of demethylmenaquinol (DMKH2) to menaquinol (MKH2) and the conversion of 2-polyprenyl-6-methoxy-1,4-benzoquinol (DDMQH2) to 2-polyprenyl-3-methyl-6-methoxy-1,4-benzoquinol (DMQH2). In Cupriavidus pinatubonensis (strain JMP 134 / LMG 1197) (Cupriavidus necator (strain JMP 134)), this protein is Ubiquinone/menaquinone biosynthesis C-methyltransferase UbiE.